Reading from the N-terminus, the 887-residue chain is Probable dual specificity protein kinase madd-3 (887 aa).

Disordered regions lie at residues 77–147, 163–299, 313–333, 347–475, and 504–533; these read PIKS…ISAA, AQPP…PKAL, LPQSSNQNTDDGQQPTTSTGG, TTIC…KSAA, and RKPSRSGLQASQARPKVPEIVSSQRTQHQD. Residues 108–118 show a composition bias toward low complexity; that stretch reads PTQNPVQLPLP. Residues 121-130 are compositionally biased toward basic and acidic residues; the sequence is VSEKPGDKKS. The segment covering 177–192 has biased composition (polar residues); that stretch reads SETNSGSGPVSKQVSG. A compositionally biased stretch (low complexity) spans 217-241; that stretch reads SSASTRAKAASAVAPEANPAPVPTA. Polar residues-rich tracts occupy residues 314–332 and 356–366; these read PQSSNQNTDDGQQPTTSTG and NVPSTSQPQQG. Over residues 367–377 the composition is skewed to basic and acidic residues; the sequence is DNEKRLIEKKL. The segment covering 407 to 419 has biased composition (low complexity); sequence LSSNLTTTNNNNN. The span at 439–462 shows a compositional bias: polar residues; it reads FSTQAGSGNATTVDDPASTTTSKE. In terms of domain architecture, Protein kinase spans 551 to 863; sequence FTIYDTLGEG…LPEALQHRYF (313 aa). ATP contacts are provided by residues 557–565 and lysine 580; that span reads LGEGTFGKV. Aspartate 677 (proton acceptor) is an active-site residue.

It belongs to the protein kinase superfamily. CMGC Ser/Thr protein kinase family. Lammer subfamily. Expressed in body wall, vulval and anal depressor muscles.

Its subcellular location is the cytoplasm. The protein resides in the nucleus. Its function is as follows. Probable dual specificity kinase acting on both serine/threonine and tyrosine-containing substrates. Negatively regulates p38 MAPK signaling to allow for the plasma membrane of body wall muscle cells to form projections, also called muscle arms, that extend and connect the body wall muscles to target motor neurons. Negative regulation of p38 MAPK signaling may in turn modulate the trafficking of the muscle specific receptor eva-1 to the lysosome, to ensure proper display of the eva-1 receptor on the plasma membrane of muscle cells and allow for muscle arm extension towards guidance cues. In Caenorhabditis elegans, this protein is Probable dual specificity protein kinase madd-3.